The following is a 311-amino-acid chain: Nuclear hormone receptor family member nhr-111 (311 aa).

Positions 39–115 form a DNA-binding region, nuclear receptor; sequence ITLCAVCGDT…KGMNKNAVQP (77 aa). NR C4-type zinc fingers lie at residues 42–62 and 78–98; these read CAVCGDTSNGNHYGVPTCFGC and CWNGDGNCVIDKANRNRCKSC. The region spanning 116–311 is the NR LBD domain; sequence ERTSHSYTVE…KACEIVISFL (196 aa).

It belongs to the nuclear hormone receptor family.

Its subcellular location is the nucleus. Orphan nuclear receptor. The chain is Nuclear hormone receptor family member nhr-111 (nhr-111) from Caenorhabditis elegans.